The primary structure comprises 617 residues: Protein fem-1 homolog C (617 aa).

ANK repeat units follow at residues 2–31, 40–70, 82–111, 115–144, 148–177, 181–210, and 213–242; these read DLKT…KDDV, NGAT…SVEI, EGAP…SVNN, TNST…DLEV, HGHT…DVNR, KGNT…RMEK, and YGMT…TSKN. TPR repeat units follow at residues 245–279 and 338–371; these read INAL…RHSD and SYYI…QQNN. ANK repeat units follow at residues 481–523 and 527–556; these read NNFS…DVNV and EQNS…HFDS.

The protein belongs to the fem-1 family. Component of a CRL2 E3 ubiquitin-protein ligase complex, also named ECS (Elongin BC-CUL2/5-SOCS-box protein) complex.

It functions in the pathway protein modification; protein ubiquitination. Substrate-recognition component of a Cul2-RING (CRL2) E3 ubiquitin-protein ligase complex of the DesCEND (destruction via C-end degrons) pathway, which recognizes a C-degron located at the extreme C terminus of target proteins, leading to their ubiquitination and degradation. The C-degron recognized by the DesCEND pathway is usually a motif of less than ten residues and can be present in full-length proteins, truncated proteins or proteolytically cleaved forms. The CRL2(FEM1C) complex specifically recognizes proteins with an arginine at the C-terminus: recognizes and binds proteins ending with -Lys/Arg-Xaa-Arg and -Lys/Arg-Xaa-Xaa-Arg C-degrons, leading to their ubiquitination and degradation. This chain is Protein fem-1 homolog C, found in Xenopus laevis (African clawed frog).